Consider the following 77-residue polypeptide: uncharacterized protein (77 aa).

This is an uncharacterized protein from Saccharomyces cerevisiae (strain ATCC 204508 / S288c) (Baker's yeast).